Reading from the N-terminus, the 338-residue chain is Phenylalanine--tRNA ligase alpha subunit (338 aa).

Glu-253 is a binding site for Mg(2+).

The protein belongs to the class-II aminoacyl-tRNA synthetase family. Phe-tRNA synthetase alpha subunit type 1 subfamily. In terms of assembly, tetramer of two alpha and two beta subunits. Mg(2+) serves as cofactor.

Its subcellular location is the cytoplasm. It catalyses the reaction tRNA(Phe) + L-phenylalanine + ATP = L-phenylalanyl-tRNA(Phe) + AMP + diphosphate + H(+). The polypeptide is Phenylalanine--tRNA ligase alpha subunit (Geobacter metallireducens (strain ATCC 53774 / DSM 7210 / GS-15)).